Consider the following 200-residue polypeptide: MADQGLEGSQPVDLTKHPSGIVPTLQNIVSTVNLDCKLDLKAIALQARNAEYNPKRFAAVIMRIREPKTTALIFASGKMVCTGAKSEQQSKLAARKYARIIQKLGFPAKFKDFKIQNIVGSCDVKFPIRLEGLAYAHGAFSSYEPELFPGLIYRMKQPKIVLLIFVSGKIVITGAKVRDETYTAFENIYPVLTEFRKNQQ.

Repeat copies occupy residues 25-101 and 115-192.

It belongs to the TBP family. As to quaternary structure, belongs to the TFIID complex together with the TBP-associated factors (TAFs). Binds DNA as monomer.

The protein localises to the nucleus. Functionally, general transcription factor that functions at the core of the DNA-binding multiprotein factor TFIID. Binding of TFIID to the TATA box is the initial transcriptional step of the pre-initiation complex (PIC), playing a role in the activation of eukaryotic genes transcribed by RNA polymerase II. This Solanum tuberosum (Potato) protein is TATA-box-binding protein (TBP).